Reading from the N-terminus, the 94-residue chain is (2R)-sulfolactate sulfo-lyase subunit alpha (94 aa).

Positions 16-90 constitute an AFP-like domain; the sequence is VVVVEGVEAG…GEHVHVHNVK (75 aa).

(2R)-sulfolactate sulfo-lyase is composed of a SuyA and a SuyB subunit.

The protein resides in the cytoplasm. The enzyme catalyses (2R)-3-sulfolactate = sulfite + pyruvate + H(+). Functionally, together with SuyB, desulfonates sulfolactate to pyruvate and sulfite. The sequence is that of (2R)-sulfolactate sulfo-lyase subunit alpha (suyA) from Chromohalobacter salexigens (strain ATCC BAA-138 / DSM 3043 / CIP 106854 / NCIMB 13768 / 1H11).